Reading from the N-terminus, the 173-residue chain is Alpha-crystallin A chain (173 aa).

N-acetylmethionine is present on Met1. Positions Met1 to Glu63 are required for complex formation with BFSP1 and BFSP2. Gln6 is modified (deamidated glutamine; partial). Ser45 carries the post-translational modification Phosphoserine. The residue at position 50 (Gln50) is a Deamidated glutamine; partial. The region spanning Leu52–Ser162 is the sHSP domain. At Lys70 the chain carries N6-acetyllysine. His79 is a Zn(2+) binding site. Gln90 is subject to Deamidated glutamine; partial. An N6-acetyllysine modification is found at Lys99. His100 is a binding site for Zn(2+). Residue Asn101 is modified to Deamidated asparagine; partial. The Zn(2+) site is built by Glu102 and His107. Ser122 bears the Phosphoserine mark. Asn123 bears the Deamidated asparagine; partial mark. The tract at residues Pro144–Ser173 is disordered. The segment covering Gly153–Pro167 has biased composition (basic and acidic residues). His154 contacts Zn(2+). Ser162 carries O-linked (GlcNAc) serine glycosylation.

It belongs to the small heat shock protein (HSP20) family. In terms of assembly, heteromer composed of three CRYAA and one CRYAB subunits. Inter-subunit bridging via zinc ions enhances stability, which is crucial as there is no protein turn over in the lens. Can also form homodimers and homotetramers (dimers of dimers) which serve as the building blocks of homooligomers. Within homooligomers, the zinc-binding motif is created from residues of 3 different molecules. His-100 and Glu-102 from one molecule are ligands of the zinc ion, and His-107 and His-154 residues from additional molecules complete the site with tetrahedral coordination geometry. Part of a complex required for lens intermediate filament formation composed of BFSP1, BFSP2 and CRYAA. Post-translationally, acetylation at Lys-70 may increase chaperone activity. In terms of processing, undergoes age-dependent proteolytical cleavage at the C-terminus.

It localises to the cytoplasm. The protein resides in the nucleus. Functionally, contributes to the transparency and refractive index of the lens. Acts as a chaperone, preventing aggregation of various proteins under a wide range of stress conditions. Required for the correct formation of lens intermediate filaments as part of a complex composed of BFSP1, BFSP2 and CRYAA. The protein is Alpha-crystallin A chain (CRYAA) of Sus scrofa (Pig).